We begin with the raw amino-acid sequence, 507 residues long: Mandelamide hydrolase (507 aa).

Active-site charge relay system residues include K100 and S180. S204 (acyl-ester intermediate) is an active-site residue.

As to quaternary structure, monomer.

The enzyme catalyses (R)-mandelamide + H2O = (R)-mandelate + NH4(+). Its activity is regulated as follows. Inhibited by 3,4-dichloroisocoumarin and PMSF. Its function is as follows. Hydrolyzes both the R- and the S-enantiomers of mandelamide, and phenylacetamide. Has lower activity on 3-phenylpropionaide and lactamide. Does not hydrolyze benzamide. Hydrolyzes esters and amides with little steric bulk. Preferentially hydrolyzes aromatic substrates. The protein is Mandelamide hydrolase of Pseudomonas putida (Arthrobacter siderocapsulatus).